The sequence spans 347 residues: Dual specificity mitogen-activated protein kinase kinase 3 (347 aa).

M1 is subject to N-acetylmethionine. Over residues 1-11 (MESPAASPPAS) the composition is skewed to pro residues. Residues 1–45 (MESPAASPPASLPQTKGKSKRKKDLRISCVSKPPVSNPTPPRNLD) are disordered. Position 3 is a phosphoserine (S3). Positions 64 to 325 (LVTISELGRG…YLELMEHPFF (262 aa)) constitute a Protein kinase domain. ATP is bound by residues 70–78 (LGRGAYGVV) and K93. The active-site Proton acceptor is the D190. Residue S218 is modified to Phosphoserine. A Phosphothreonine modification is found at T222.

Belongs to the protein kinase superfamily. STE Ser/Thr protein kinase family. MAP kinase kinase subfamily. In terms of assembly, component of a signaling complex containing at least AKAP13, PKN1, MAPK14, ZAK and MAP2K3. Within this complex, AKAP13 interacts directly with PKN1, which in turn recruits MAPK14, MAP2K3 and ZAK. Binds to DYRK1B/MIRK and increases its kinase activity. Part of a complex with MAP3K3, RAC1 and CCM2. Interacts with ARRB1. Post-translationally, autophosphorylated. Phosphorylation on Ser-218 and Thr-222 by MAP kinase kinase kinases positively regulates the kinase activity. Phosphorylated by TAOK2.

The catalysed reaction is L-seryl-[protein] + ATP = O-phospho-L-seryl-[protein] + ADP + H(+). It catalyses the reaction L-threonyl-[protein] + ATP = O-phospho-L-threonyl-[protein] + ADP + H(+). It carries out the reaction L-tyrosyl-[protein] + ATP = O-phospho-L-tyrosyl-[protein] + ADP + H(+). With respect to regulation, activated by dual phosphorylation on Ser-218 and Thr-222. In terms of biological role, dual specificity kinase. Is activated by cytokines and environmental stress in vivo. Catalyzes the concomitant phosphorylation of a threonine and a tyrosine residue in the MAP kinase p38. Part of a signaling cascade that begins with the activation of the adrenergic receptor ADRA1B and leads to the activation of MAPK14. The polypeptide is Dual specificity mitogen-activated protein kinase kinase 3 (Map2k3) (Mus musculus (Mouse)).